The sequence spans 172 residues: Small ribosomal subunit protein uS5 (172 aa).

The S5 DRBM domain occupies 13–76 (LVEKMISVNR…EQARHNMMKI (64 aa)).

It belongs to the universal ribosomal protein uS5 family. Part of the 30S ribosomal subunit. Contacts proteins S4 and S8.

Its function is as follows. With S4 and S12 plays an important role in translational accuracy. Located at the back of the 30S subunit body where it stabilizes the conformation of the head with respect to the body. The protein is Small ribosomal subunit protein uS5 of Chromobacterium violaceum (strain ATCC 12472 / DSM 30191 / JCM 1249 / CCUG 213 / NBRC 12614 / NCIMB 9131 / NCTC 9757 / MK).